The chain runs to 815 residues: Protein SMAX1-LIKE 3 (815 aa).

In terms of domain architecture, Clp R spans 8-171 (VEQALTADAA…TKVEQAVSLE (164 aa)). Repeat stretches follow at residues 12–80 (LTAD…LNRL) and 99–171 (ISNA…VSLE). The interval 750–769 (SRACSPPSNQKSDGSDQPED) is disordered. The EAR signature appears at 778 to 782 (LDLNL).

It belongs to the ClpA/ClpB family. In terms of assembly, interacts probably with TPL/TPR in an EAR-motif dependent manner. Expressed in roots and seedlings.

May function in a transcriptional corepressor complex. This Arabidopsis thaliana (Mouse-ear cress) protein is Protein SMAX1-LIKE 3.